Consider the following 586-residue polypeptide: MPRVHHSLSNQAFLVLLLFSSIASAAIVEHVLHVKDVVVTPLCKEQMIPIVNGSLPGPTINVREGDTLVVHVINKSTYNVTIHWHGVFQLKSVWMDGANMITQCPIQPSNNFTYQFDITGQEGTLLWHAHVVNLRATIHGALIIRPRSGRPYPFPKPYKEVPLIFQQWWDTDVRLLELRPAPVSDAYLINGLAGDSYPCSKNRMFNLKVVQGKTYLLRIINAALNTHLFFKIANHNVTVVAVDAVYTTPYLTDVMILTPGQTIDAILTADQPIGTYYMAIIPYFSAIGVPASPDTKPTRGLIVYEGATSSSSPTKPWMPPANDIPTAHRFSSNITSLVGGPHWTPVPRHVDEKMFITMGLGLDPCPSNAKCVGPLDQRLAGSLNNRTFMIPERISMQEAYFYNITGVYTDDFPDQPPLKFDFTKFEQHPTNSDMEMMFPERKTSVKTIRFNSTVEIVLQNTGILTPESHPMHLHGFNFYVLGYGFGNYDPIRDARKLNLFNPQMHNTVGVPPGGWVVLRFIANNPGIWLFHCHMDAHLPLGIMMAFIVQNGPTRETSLPSPPSNLPQCTRDPTIYDSRTTNVDMSY.

An N-terminal signal peptide occupies residues 1–25 (MPRVHHSLSNQAFLVLLLFSSIASA). 2 Plastocyanin-like domains span residues 33-149 (HVKD…PRSG) and 159-307 (KEVP…YEGA). 3 N-linked (GlcNAc...) asparagine glycosylation sites follow: Asn-52, Asn-74, and Asn-79. His-83 and His-85 together coordinate Cu cation. A glycan (N-linked (GlcNAc...) asparagine) is linked at Asn-111. 2 residues coordinate Cu cation: His-128 and His-130. Residues Asn-236, Asn-333, Asn-385, Asn-403, and Asn-451 are each glycosylated (N-linked (GlcNAc...) asparagine). The Plastocyanin-like 3 domain occupies 411–552 (DFPDQPPLKF…MMAFIVQNGP (142 aa)). The Cu cation site is built by His-469, His-472, His-474, His-531, Cys-532, His-533, and His-537.

The protein belongs to the multicopper oxidase family. Cu cation is required as a cofactor. In terms of tissue distribution, predominantly expressed in roots.

It is found in the secreted. The protein localises to the extracellular space. Its subcellular location is the apoplast. It carries out the reaction 4 hydroquinone + O2 = 4 benzosemiquinone + 2 H2O. Lignin degradation and detoxification of lignin-derived products. In Arabidopsis thaliana (Mouse-ear cress), this protein is Laccase-9 (LAC9).